The sequence spans 287 residues: Eukaryotic translation initiation factor 3 subunit G (287 aa).

Disordered stretches follow at residues 1–34 and 159–184; these read MSKL…KDGT and TAGG…YVPP. In terms of domain architecture, RRM spans 207–285; the sequence is ATLRVTNVSE…LILRVEFAKR (79 aa).

It belongs to the eIF-3 subunit G family. As to quaternary structure, component of the eukaryotic translation initiation factor 3 (eIF-3) complex.

The protein resides in the cytoplasm. Its function is as follows. RNA-binding component of the eukaryotic translation initiation factor 3 (eIF-3) complex, which is involved in protein synthesis of a specialized repertoire of mRNAs and, together with other initiation factors, stimulates binding of mRNA and methionyl-tRNAi to the 40S ribosome. The eIF-3 complex specifically targets and initiates translation of a subset of mRNAs involved in cell proliferation. This subunit can bind 18S rRNA. This chain is Eukaryotic translation initiation factor 3 subunit G (tif35), found in Aspergillus oryzae (strain ATCC 42149 / RIB 40) (Yellow koji mold).